A 399-amino-acid polypeptide reads, in one-letter code: Glycosyltransferase BC10 (399 aa).

Topologically, residues 1–17 are cytoplasmic; the sequence is MKPPRRWMYGRGGGKGK. Residues 18-38 form a helical; Signal-anchor for type II membrane protein membrane-spanning segment; sequence PAGLLLLGVFLCLSVVLLLLL. At 39-399 the chain is on the lumenal side; sequence HGSSPSLEGE…LIAANGASTM (361 aa). Asn-142 and Asn-188 each carry an N-linked (GlcNAc...) asparagine glycan.

The protein belongs to the glycosyltransferase 14 family. As to expression, expressed in roots, culms, leaves and panicles. Expressed in vascular bundles of leaf sheaths and stems where sclerenchyma cells are developing. Expressed in mechanical tissues of young organs, such as young leaf sheaths, stems and tiller buds.

The protein localises to the membrane. Functionally, glycosyltransferase required for the regulation of cellulose biosynthesis in the cell wall. Required for the biosynthesis of hexoses (glucose, mannose and galactose) in both cellulosic and non-cellulosic (pectins and hemicelluloses) components of cell walls. Required for the formation of arabinogalactan proteins which contribute to the strengthening of cell walls. Possesses low glycosyltransferase activity. In Oryza sativa subsp. japonica (Rice), this protein is Glycosyltransferase BC10.